The primary structure comprises 375 residues: Digeranylgeranylglycerophospholipid reductase 1 (375 aa).

Alanine 13, glutamate 32, cysteine 43, alanine 44, glycine 46, arginine 92, alanine 116, aspartate 275, glycine 287, and leucine 288 together coordinate FAD. A 2,3-bis-O-(geranylgeranyl)-sn-glycerol 1-phospholipid is bound at residue glycine 367.

The protein belongs to the geranylgeranyl reductase family. DGGGPL reductase subfamily. It depends on FAD as a cofactor.

It catalyses the reaction a 2,3-bis-O-phytanyl-sn-glycerol 1-phospholipid + 8 A = a 2,3-bis-O-(geranylgeranyl)-sn-glycerol 1-phospholipid + 8 AH2. The enzyme catalyses 2,3-bis-O-(phytanyl)-sn-glycerol 1-phosphate + 8 A = 2,3-bis-O-(geranylgeranyl)-sn-glycerol 1-phosphate + 8 AH2. It carries out the reaction CDP-2,3-bis-O-(geranylgeranyl)-sn-glycerol + 8 AH2 = CDP-2,3-bis-O-(phytanyl)-sn-glycerol + 8 A. The catalysed reaction is archaetidylserine + 8 AH2 = 2,3-bis-O-phytanyl-sn-glycero-3-phospho-L-serine + 8 A. The protein operates within membrane lipid metabolism; glycerophospholipid metabolism. Functionally, is involved in the reduction of 2,3-digeranylgeranylglycerophospholipids (unsaturated archaeols) into 2,3-diphytanylglycerophospholipids (saturated archaeols) in the biosynthesis of archaeal membrane lipids. Catalyzes the formation of archaetidic acid (2,3-di-O-phytanyl-sn-glyceryl phosphate) from 2,3-di-O-geranylgeranylglyceryl phosphate (DGGGP) via the hydrogenation of each double bond of the isoprenoid chains. Is also probably able to reduce double bonds of geranyl groups in CDP-2,3-bis-O-(geranylgeranyl)-sn-glycerol and archaetidylserine, thus acting at various stages in the biosynthesis of archaeal membrane lipids. In Methanopyrus kandleri (strain AV19 / DSM 6324 / JCM 9639 / NBRC 100938), this protein is Digeranylgeranylglycerophospholipid reductase 1.